Reading from the N-terminus, the 338-residue chain is Lipoate-protein ligase A (338 aa).

The region spanning 29–216 (PATQRVLFLW…AFFAHYGERV (188 aa)) is the BPL/LPL catalytic domain. Residues Arg-71, 76 to 79 (GAVF), and Lys-134 contribute to the ATP site. Lys-134 contacts (R)-lipoate.

Belongs to the LplA family. As to quaternary structure, monomer.

The protein localises to the cytoplasm. It carries out the reaction L-lysyl-[lipoyl-carrier protein] + (R)-lipoate + ATP = N(6)-[(R)-lipoyl]-L-lysyl-[lipoyl-carrier protein] + AMP + diphosphate + H(+). The protein operates within protein modification; protein lipoylation via exogenous pathway; protein N(6)-(lipoyl)lysine from lipoate: step 1/2. Its pathway is protein modification; protein lipoylation via exogenous pathway; protein N(6)-(lipoyl)lysine from lipoate: step 2/2. Its function is as follows. Catalyzes both the ATP-dependent activation of exogenously supplied lipoate to lipoyl-AMP and the transfer of the activated lipoyl onto the lipoyl domains of lipoate-dependent enzymes. In Escherichia coli O9:H4 (strain HS), this protein is Lipoate-protein ligase A.